The sequence spans 230 residues: Intracellular hyphae protein 1 (230 aa).

The first 18 residues, 1 to 18, serve as a signal peptide directing secretion; that stretch reads MQTSFVALLAVAASLASA. The segment at 20–102 is disordered; sequence PHGGNSYEAS…KNNTLPVPTC (83 aa). 10 repeat units span residues 30-33, 36-39, 42-45, 46-49, 50-53, 57-60, 65-68, 76-79, 80-83, and 84-87. Residues 30 to 87 form a 5 X 4 AA repeats of L-P-E-P region; it reads LPEPTNLPEPTKLPEPVEGPYKPKPPILPEPIKDNYKPKTPILPEHVEGPYKPKLPEP. Residues 46-87 form a 2 X 4 AA repeats of V-E-G-P region; it reads VEGPYKPKPPILPEPIKDNYKPKTPILPEHVEGPYKPKLPEP. Residues 50-83 form a 3 X 4 AA repeats of Y-K-P-K region; it reads YKPKPPILPEPIKDNYKPKTPILPEHVEGPYKPK. A compositionally biased stretch (basic and acidic residues) spans 74 to 84; the sequence is EHVEGPYKPKL. An N-linked (GlcNAc...) asparagine glycan is attached at N94. The 45-residue stretch at 108-152 folds into the LysM 1 domain; sequence KTHKVKSGESLTTIAEKYDTGICNIAKLNNLADPNFVDLNQDLQI. N-linked (GlcNAc...) asparagine glycosylation is present at N161. Positions 183-227 constitute a LysM 2 domain; sequence DIYSVVSGDTLTSIAQALQITLQSLKDANPGVVPEHLNVGQKLNV.

As to quaternary structure, forms a multimeric structure. In terms of processing, N-glycosylated and may be O-glycosylated. In terms of tissue distribution, expressed in penetration hyphae, infection vesicles and primary hyphae (intracellular hyphae).

The protein resides in the secreted. Its subcellular location is the cell wall. May have roles in host-pathogen interaction, including establishment and maintenance of biotrophy, prevention of host recognition of the fungus and a barrier to host defense molecules. This chain is Intracellular hyphae protein 1 (CIH1), found in Colletotrichum lindemuthianum (Bean anthracnose fungus).